The sequence spans 1247 residues: Nidogen-1 (1247 aa).

The first 28 residues, 1 to 28 (MLASSSRIRAAWTRALLLPLLLAGPVGC), serve as a signal peptide directing secretion. The 163-residue stretch at 106-268 (PFLADLDTTD…GVWVFEIGSP (163 aa)) folds into the NIDO domain. 2 positions are modified to sulfotyrosine: Tyr289 and Tyr296. The EGF-like 1 domain maps to 386-426 (SRQTCANNRHQCSVHAECRDYATGFCCSCVAGYTGNGRQCV). 19 cysteine pairs are disulfide-bonded: Cys390–Cys403, Cys397–Cys412, Cys411–Cys618, Cys414–Cys425, Cys672–Cys685, Cys679–Cys695, Cys697–Cys708, Cys714–Cys727, Cys721–Cys736, Cys738–Cys750, Cys762–Cys777, Cys769–Cys787, Cys789–Cys800, Cys806–Cys817, Cys811–Cys826, Cys828–Cys839, Cys849–Cys878, Cys889–Cys896, and Cys898–Cys919. A Nidogen G2 beta-barrel domain is found at 430-667 (SPQRVNGKVK…GPVREGSPDA (238 aa)). The 42-residue stretch at 668-709 (LQNPCYIGTHGCDTNAACRPGPRTQFTCECSIGFRGDGRTCY) folds into the EGF-like 2 domain. Residues 702–704 (RGD) carry the Cell attachment site motif. An EGF-like 3; calcium-binding domain is found at 710-751 (DIDECSEQPSVCGSHTICNNHPGTFRCECVEGYQFSDEGTCV). The 44-residue stretch at 758–801 (PINYCETGLHNCDIPQRAQCIYTGGSSYTCSCLPGFSGDGQACQ) folds into the EGF-like 4 domain. One can recognise an EGF-like 5; calcium-binding domain in the interval 802–840 (DVDECQPSRCHPDAFCYNTPGSFTCQCKPGYQGDGFRCV). The region spanning 846–919 (KTRCQHEREH…RTRPGMTPPC (74 aa)) is the Thyroglobulin type-1 domain. O-linked (GalNAc...) threonine glycans are attached at residues Thr922 and Thr935. LDL-receptor class B repeat units lie at residues 990–1032 (KMVY…DHLG), 1033–1075 (RNIF…DSVR), 1076–1120 (GNLY…DAFS), and 1121–1162 (SQLC…YGKN). Residues 1208 to 1244 (GHNYCSVNNGGCTHLCLATPGSRTCRCPDNTLGVDCI) enclose the EGF-like 6 domain. 3 disulfide bridges follow: Cys1212–Cys1223, Cys1219–Cys1232, and Cys1234–Cys1243.

In terms of assembly, interacts with FBLN1. Interacts with LGALS3BP. Interacts with PLXDC1. Interacts with SVEP1. Post-translationally, N- and O-glycosylated.

The protein localises to the secreted. The protein resides in the extracellular space. It localises to the extracellular matrix. Its subcellular location is the basement membrane. In terms of biological role, sulfated glycoprotein widely distributed in basement membranes and tightly associated with laminin. Also binds to collagen IV and perlecan. It probably has a role in cell-extracellular matrix interactions. In Homo sapiens (Human), this protein is Nidogen-1 (NID1).